Consider the following 195-residue polypeptide: MSAADVEYRVRHQAFWFVACLAVLVAQIIAEYLMGRVPICACGYVKLWEGGVNTSGNSQHLSDWYTPSHIIHGFLFYGLGYLILRRKPLAARLLLALMIESGWELLENSPLIIDRYRTATMALDYYGDSILNSAMDTVFMCLGFFFAARAPVALTVVIAIFFEIFTGYVIRDNLTLNVLMLIWPVEAIKVWQGGL.

4 consecutive transmembrane segments (helical) span residues 14–34 (AFWF…EYLM), 64–84 (WYTP…YLIL), 128–148 (DSIL…FFAA), and 150–170 (APVA…GYVI).

It belongs to the UPF0314 family.

It localises to the cell membrane. The sequence is that of UPF0314 protein RHE_CH03951 from Rhizobium etli (strain ATCC 51251 / DSM 11541 / JCM 21823 / NBRC 15573 / CFN 42).